Reading from the N-terminus, the 318-residue chain is tRNA dimethylallyltransferase (318 aa).

An ATP-binding site is contributed by 28-35 (GPTGAGKS). 30 to 35 (TGAGKS) contributes to the substrate binding site. The tract at residues 53-56 (DSMQ) is interaction with substrate tRNA.

This sequence belongs to the IPP transferase family. As to quaternary structure, monomer. It depends on Mg(2+) as a cofactor.

It carries out the reaction adenosine(37) in tRNA + dimethylallyl diphosphate = N(6)-dimethylallyladenosine(37) in tRNA + diphosphate. Catalyzes the transfer of a dimethylallyl group onto the adenine at position 37 in tRNAs that read codons beginning with uridine, leading to the formation of N6-(dimethylallyl)adenosine (i(6)A). The polypeptide is tRNA dimethylallyltransferase (Parafrankia sp. (strain EAN1pec)).